A 206-amino-acid chain; its full sequence is Large ribosomal subunit protein uL4 (206 aa).

The tract at residues 46–77 is disordered; the sequence is GTRAQKDREQVKHSTKKPFKQKGTGNARAGMT.

The protein belongs to the universal ribosomal protein uL4 family. In terms of assembly, part of the 50S ribosomal subunit.

Functionally, one of the primary rRNA binding proteins, this protein initially binds near the 5'-end of the 23S rRNA. It is important during the early stages of 50S assembly. It makes multiple contacts with different domains of the 23S rRNA in the assembled 50S subunit and ribosome. Forms part of the polypeptide exit tunnel. This is Large ribosomal subunit protein uL4 from Acidovorax ebreus (strain TPSY) (Diaphorobacter sp. (strain TPSY)).